We begin with the raw amino-acid sequence, 336 residues long: Calcium uniporter regulatory subunit MCUb, mitochondrial (336 aa).

The transit peptide at 1-35 (MLQRGLWPWRTRLLPTPGTWRPARPWPLPPPPQVL) directs the protein to the mitochondrion. A coiled-coil region spans residues 179 to 210 (ESQKKREHHLLEKIDHLKEQLQPLEQVKAGIE). 2 helical membrane-spanning segments follow: residues 220-240 (LLWA…WLTW) and 250-270 (PVTY…FIVT). Residues 297-323 (FDVQQYNKLKEDLAKAKESLKQARHSL) adopt a coiled-coil conformation.

The protein belongs to the MCU (TC 1.A.77) family. Homooligomer. Associates with the uniplex complex, composed of MCU, MICU1, MICU2 and EMRE/SMDT1, inhibiting its activity.

It localises to the mitochondrion inner membrane. In terms of biological role, negative regulator of the mitochondrial calcium uniporter (MCU), a channel that mediates calcium uptake into the mitochondrial matrix. MCUB is required to limit mitochondrial calcium overload during stress. Acts as a dominant-negative regulator that displaces MCU from the functional uniplex complex and thereby decreases the association of calcium sensors MICU1 and MICU2, preventing channel gating. Mitochondrial calcium homeostasis plays key roles in mitochondrial metabolism. Acts as an important regulator of mitochondrial metabolism in response to stress in muscle cells: induced in response to fasting, leading to restrict mitochondrial calcium uptake, resulting in reprogramming of mitochondria toward fatty acid oxidation preference. Acts as a regulator of macrophage polarization during skeletal muscle regeneration: inhibition of mitochondrial calcium uptake drives differentiation of macrophages with anti-inflammatory profile, promoting the differentiation and fusion of satellite cells. This Homo sapiens (Human) protein is Calcium uniporter regulatory subunit MCUb, mitochondrial.